The following is an 87-amino-acid chain: Large ribosomal subunit protein bL27 (87 aa).

A disordered region spans residues 1–23 (MAHKKGTGSTRNGRDSNAQRLGV). The segment covering 7–19 (TGSTRNGRDSNAQ) has biased composition (polar residues).

Belongs to the bacterial ribosomal protein bL27 family.

This is Large ribosomal subunit protein bL27 (rpmA) from Synechocystis sp. (strain ATCC 27184 / PCC 6803 / Kazusa).